The following is a 303-amino-acid chain: Glutathione transport system permease protein GsiD (303 aa).

Helical transmembrane passes span 40 to 60, 105 to 125, 144 to 164, 165 to 185, 222 to 242, and 266 to 286; these read AMTAALFVILLIVVAIFARWI, LAAGVFAVFIGAAIGTLLGLL, LFAFPGILLAIAVVAVLGSGI, ANVIIAVAIFSIPAFARLVRG, IVVFFTMRIGTSIISAASLSF, and VIAPHVAVFPALAIFLTVLAF. The 190-residue stretch at 101–290 folds into the ABC transmembrane type-1 domain; that stretch reads AQISLAAGVF…LTVLAFNLLG (190 aa).

It belongs to the binding-protein-dependent transport system permease family. The complex is composed of two ATP-binding proteins (GsiA), two transmembrane proteins (GsiC and GsiD) and a solute-binding protein (GsiB).

The protein resides in the cell inner membrane. Functionally, part of the ABC transporter complex GsiABCD involved in glutathione import. Probably responsible for the translocation of the substrate across the membrane. The sequence is that of Glutathione transport system permease protein GsiD from Escherichia coli O1:K1 / APEC.